Consider the following 571-residue polypeptide: 5' exonuclease Apollo (571 aa).

Disordered stretches follow at residues 346 to 386 (TSRP…TDRN) and 431 to 487 (MDDN…SMHD). Basic and acidic residues-rich tracts occupy residues 367–386 (NHDD…TDRN) and 453–468 (ECDH…EKSP). The span at 470–487 (MGSTNSGEMCSSMDSMHD) shows a compositional bias: polar residues. The TBM motif lies at 501-532 (NPQSVTSAIPITLESEQFEHWLLENFTIPAEE).

The protein belongs to the DNA repair metallo-beta-lactamase (DRMBL) family. In terms of assembly, interacts with terf2; the interaction is direct.

The protein localises to the chromosome. Its subcellular location is the telomere. The protein resides in the nucleus. The catalysed reaction is a beta-lactam + H2O = a substituted beta-amino acid. 5'-3' exonuclease that plays a central role in telomere maintenance and protection during S-phase. Participates in the protection of telomeres against non-homologous end-joining (NHEJ)-mediated repair, thereby ensuring that telomeres do not fuse. Plays a key role in telomeric loop (T loop) formation by being recruited by terf2 at the leading end telomeres and by processing leading-end telomeres immediately after their replication via its exonuclease activity: generates 3' single-stranded overhang at the leading end telomeres avoiding blunt leading-end telomeres that are vulnerable to end-joining reactions and expose the telomere end in a manner that activates the DNA repair pathways. Possesses beta-lactamase activity, catalyzing the hydrolysis of penicillin G and nitrocefin. Exhibits no activity towards other beta-lactam antibiotic classes including cephalosporins (cefotaxime) and carbapenems (imipenem). This is 5' exonuclease Apollo (dclre1b) from Danio rerio (Zebrafish).